A 318-amino-acid chain; its full sequence is NADH-ubiquinone oxidoreductase chain 1 (318 aa).

Helical transmembrane passes span 2–22 (LLTN…FLTL), 69–89 (LMFI…WAPL), 102–122 (ILFI…SGWA), 147–167 (AIIL…TLTI), 172–192 (MWLI…TLAE), 231–251 (IILM…NPLF), 253–273 (ELHT…FLWI), and 294–314 (LPLT…LAGI).

Belongs to the complex I subunit 1 family.

Its subcellular location is the mitochondrion inner membrane. It carries out the reaction a ubiquinone + NADH + 5 H(+)(in) = a ubiquinol + NAD(+) + 4 H(+)(out). In terms of biological role, core subunit of the mitochondrial membrane respiratory chain NADH dehydrogenase (Complex I) that is believed to belong to the minimal assembly required for catalysis. Complex I functions in the transfer of electrons from NADH to the respiratory chain. The immediate electron acceptor for the enzyme is believed to be ubiquinone. This is NADH-ubiquinone oxidoreductase chain 1 (MT-ND1) from Bradypus variegatus (Brown-throated three-fingered sloth).